Consider the following 573-residue polypeptide: Phosphoenolpyruvate-protein phosphotransferase (573 aa).

His190 functions as the Tele-phosphohistidine intermediate in the catalytic mechanism. Phosphoenolpyruvate is bound by residues Arg297 and Arg332. Residues Glu431 and Asp455 each contribute to the Mg(2+) site. Phosphoenolpyruvate is bound by residues 454-455 (ND) and Arg465. Cys502 functions as the Proton donor in the catalytic mechanism.

The protein belongs to the PEP-utilizing enzyme family. As to quaternary structure, homodimer. The cofactor is Mg(2+).

It is found in the cytoplasm. The enzyme catalyses L-histidyl-[protein] + phosphoenolpyruvate = N(pros)-phospho-L-histidyl-[protein] + pyruvate. Its activity is regulated as follows. Irreversibly inhibited the sulfhydryl reagent N-ethylmaleimide (NEM). General (non sugar-specific) component of the phosphoenolpyruvate-dependent sugar phosphotransferase system (sugar PTS). This major carbohydrate active-transport system catalyzes the phosphorylation of incoming sugar substrates concomitantly with their translocation across the cell membrane. Enzyme I transfers the phosphoryl group from phosphoenolpyruvate (PEP) to the phosphoryl carrier protein (HPr). The sequence is that of Phosphoenolpyruvate-protein phosphotransferase (ptsI) from Mycoplasma capricolum subsp. capricolum (strain California kid / ATCC 27343 / NCTC 10154).